Here is a 372-residue protein sequence, read N- to C-terminus: UDP-N-acetylglucosamine--N-acetylmuramyl-(pentapeptide) pyrophosphoryl-undecaprenol N-acetylglucosamine transferase (372 aa).

Residues 16–18, asparagine 128, arginine 164, serine 192, isoleucine 250, and glutamine 295 contribute to the UDP-N-acetyl-alpha-D-glucosamine site; that span reads TGG.

This sequence belongs to the glycosyltransferase 28 family. MurG subfamily.

It is found in the cell inner membrane. It catalyses the reaction di-trans,octa-cis-undecaprenyl diphospho-N-acetyl-alpha-D-muramoyl-L-alanyl-D-glutamyl-meso-2,6-diaminopimeloyl-D-alanyl-D-alanine + UDP-N-acetyl-alpha-D-glucosamine = di-trans,octa-cis-undecaprenyl diphospho-[N-acetyl-alpha-D-glucosaminyl-(1-&gt;4)]-N-acetyl-alpha-D-muramoyl-L-alanyl-D-glutamyl-meso-2,6-diaminopimeloyl-D-alanyl-D-alanine + UDP + H(+). It functions in the pathway cell wall biogenesis; peptidoglycan biosynthesis. In terms of biological role, cell wall formation. Catalyzes the transfer of a GlcNAc subunit on undecaprenyl-pyrophosphoryl-MurNAc-pentapeptide (lipid intermediate I) to form undecaprenyl-pyrophosphoryl-MurNAc-(pentapeptide)GlcNAc (lipid intermediate II). In Paraburkholderia phytofirmans (strain DSM 17436 / LMG 22146 / PsJN) (Burkholderia phytofirmans), this protein is UDP-N-acetylglucosamine--N-acetylmuramyl-(pentapeptide) pyrophosphoryl-undecaprenol N-acetylglucosamine transferase.